Reading from the N-terminus, the 236-residue chain is Phosphoribosylaminoimidazole-succinocarboxamide synthase (236 aa).

It belongs to the SAICAR synthetase family.

The enzyme catalyses 5-amino-1-(5-phospho-D-ribosyl)imidazole-4-carboxylate + L-aspartate + ATP = (2S)-2-[5-amino-1-(5-phospho-beta-D-ribosyl)imidazole-4-carboxamido]succinate + ADP + phosphate + 2 H(+). The protein operates within purine metabolism; IMP biosynthesis via de novo pathway; 5-amino-1-(5-phospho-D-ribosyl)imidazole-4-carboxamide from 5-amino-1-(5-phospho-D-ribosyl)imidazole-4-carboxylate: step 1/2. The protein is Phosphoribosylaminoimidazole-succinocarboxamide synthase of Wolinella succinogenes (strain ATCC 29543 / DSM 1740 / CCUG 13145 / JCM 31913 / LMG 7466 / NCTC 11488 / FDC 602W) (Vibrio succinogenes).